The following is a 379-amino-acid chain: Cytochrome b (379 aa).

Transmembrane regions (helical) follow at residues Phe-33–Met-53, Trp-77–Ile-98, Trp-113–Leu-133, and Phe-178–Leu-198. Residues His-83 and His-97 each contribute to the heme b site. Residues His-182 and His-196 each contribute to the heme b site. His-201 is a binding site for a ubiquinone. 4 helical membrane-spanning segments follow: residues Tyr-226–Ser-246, Leu-288–His-308, Leu-320–Gly-340, and Phe-347–Pro-367.

This sequence belongs to the cytochrome b family. The cytochrome bc1 complex contains 3 respiratory subunits (MT-CYB, CYC1 and UQCRFS1), 2 core proteins (UQCRC1 and UQCRC2) and probably 6 low-molecular weight proteins. The cofactor is heme b.

Its subcellular location is the mitochondrion inner membrane. Component of the ubiquinol-cytochrome c reductase complex (complex III or cytochrome b-c1 complex) that is part of the mitochondrial respiratory chain. The b-c1 complex mediates electron transfer from ubiquinol to cytochrome c. Contributes to the generation of a proton gradient across the mitochondrial membrane that is then used for ATP synthesis. This is Cytochrome b (mt-cyb) from Amia calva (Bowfin).